A 153-amino-acid chain; its full sequence is NADH dehydrogenase [ubiquinone] 1 beta subcomplex subunit 11, mitochondrial (153 aa).

Residues 1–29 (MAAGLFGLSARRLLAAAATRGLPAARVRW) constitute a mitochondrion transit peptide. A disordered region spans residues 40-76 (PSAVAGKRPPEPTTPWQEDPEPEDENLYEKNPDSHGY). Residues 66–76 (LYEKNPDSHGY) are compositionally biased toward basic and acidic residues. The chain crosses the membrane as a helical span at residues 89–109 (LVFFFGVSIILVLGSTFVAYL).

It belongs to the complex I NDUFB11 subunit family. As to quaternary structure, complex I is composed of 45 different subunits. Interacts with BCAP31. Ubiquitous.

The protein resides in the mitochondrion inner membrane. Its function is as follows. Accessory subunit of the mitochondrial membrane respiratory chain NADH dehydrogenase (Complex I), that is believed not to be involved in catalysis. Complex I functions in the transfer of electrons from NADH to the respiratory chain. The immediate electron acceptor for the enzyme is believed to be ubiquinone. The sequence is that of NADH dehydrogenase [ubiquinone] 1 beta subcomplex subunit 11, mitochondrial (NDUFB11) from Homo sapiens (Human).